Consider the following 109-residue polypeptide: Iron-sulfur cluster assembly protein CyaY (109 aa).

This sequence belongs to the frataxin family.

Functionally, involved in iron-sulfur (Fe-S) cluster assembly. May act as a regulator of Fe-S biogenesis. This Albidiferax ferrireducens (strain ATCC BAA-621 / DSM 15236 / T118) (Rhodoferax ferrireducens) protein is Iron-sulfur cluster assembly protein CyaY.